Here is a 503-residue protein sequence, read N- to C-terminus: SWI/SNF and RSC complexes subunit ssr2 (503 aa).

One can recognise an SWIRM domain in the interval 18–115 (IIVPSYAGWF…YQIDPETRPA (98 aa)). Position 175 is a phosphoserine (Ser175). A ZZ-type; degenerate zinc finger spans residues 188-242 (RVDKVCFTCGVNCSQTWYHNLKNKKYDICPNCYKQGRFSSSFNSSDFLCMDAIDF). Cys193, Cys196, Cys216, and Cys219 together coordinate Zn(2+). The region spanning 245–296 (DEEKPWSNQETLLLLEAIETYGDDWNQIALHVGSRTKEQCLIHFLQIPIEDP) is the SANT domain. Ser306 is subject to Phosphoserine.

It belongs to the SMARCC family. As to quaternary structure, component of the RSC complex composed of at least arp9, arp42, rsc1, rsc4, rsc7, rsc9, rsc58, sfh1, snf21, ssr1, ssr2, ssr3 and ssr4. The complex interacts with histone and histone variant components of centromeric chromatin. Component of the SWI/SNF global transcription activator complex composed of at least arp9, arp42, snf5, snf22, snf30, sbf59, sol1, ssr1, ssr2, ssr3, ssr4 and tfg3.

Its subcellular location is the cytoplasm. The protein resides in the nucleus. In terms of biological role, component of the chromatin structure remodeling complex (RSC), which is involved in transcription regulation and nucleosome positioning. Controls particularly membrane and organelle development genes. Part of the SWI/SNF complex, an ATP-dependent chromatin remodeling complex, required for the positive and negative regulation of gene expression of a large number of genes. It changes chromatin structure by altering DNA-histone contacts within a nucleosome, leading eventually to a change in nucleosome position, thus facilitating or repressing binding of gene-specific transcription factors. The sequence is that of SWI/SNF and RSC complexes subunit ssr2 (ssr2) from Schizosaccharomyces pombe (strain 972 / ATCC 24843) (Fission yeast).